Here is a 620-residue protein sequence, read N- to C-terminus: Chaperone protein DnaK (620 aa).

Residue T197 is modified to Phosphothreonine; by autocatalysis. Residues 597-620 (AMANKNNAEQPKKKDDDVIDAEVE) form a disordered region.

The protein belongs to the heat shock protein 70 family.

Acts as a chaperone. The protein is Chaperone protein DnaK of Helicobacter acinonychis (strain Sheeba).